The following is a 152-amino-acid chain: MSEKYVVTWDMLQIHARKLAQRLLPAEQWKGIIAVSRGGLVPGALLARELGIRHVDTVCISSYDHDNQREMKVIKRAEGDGEGFIVVDDLVDTGGTAKAIRDMYPKAHFVTIFAKPAGQPLVDDYVIDIPQDTWIEQPWDMCVVFVPPLSGR.

Residues 37–38 (RG), Arg69, and 88–96 (DDLVDTGGT) each bind 5-phospho-alpha-D-ribose 1-diphosphate. Position 69 (Arg69) interacts with GMP. Asp89 is a Mg(2+) binding site. Residues Asp92 and Ile135 each coordinate guanine. Xanthine is bound by residues Asp92 and Ile135. Residues 92–96 (DTGGT) and 134–135 (WI) contribute to the GMP site.

The protein belongs to the purine/pyrimidine phosphoribosyltransferase family. XGPT subfamily. In terms of assembly, homotetramer. Mg(2+) is required as a cofactor.

The protein localises to the cell inner membrane. The catalysed reaction is GMP + diphosphate = guanine + 5-phospho-alpha-D-ribose 1-diphosphate. The enzyme catalyses XMP + diphosphate = xanthine + 5-phospho-alpha-D-ribose 1-diphosphate. It carries out the reaction IMP + diphosphate = hypoxanthine + 5-phospho-alpha-D-ribose 1-diphosphate. The protein operates within purine metabolism; GMP biosynthesis via salvage pathway; GMP from guanine: step 1/1. Its pathway is purine metabolism; XMP biosynthesis via salvage pathway; XMP from xanthine: step 1/1. In terms of biological role, purine salvage pathway enzyme that catalyzes the transfer of the ribosyl-5-phosphate group from 5-phospho-alpha-D-ribose 1-diphosphate (PRPP) to the N9 position of the 6-oxopurines guanine and xanthine to form the corresponding ribonucleotides GMP (guanosine 5'-monophosphate) and XMP (xanthosine 5'-monophosphate), with the release of PPi. To a lesser extent, also acts on hypoxanthine. This is Xanthine-guanine phosphoribosyltransferase from Pectobacterium atrosepticum (strain SCRI 1043 / ATCC BAA-672) (Erwinia carotovora subsp. atroseptica).